Here is a 301-residue protein sequence, read N- to C-terminus: Probable alpha-L-glutamate ligase 2 (301 aa).

The ATP-grasp domain maps to M104 to V287. ATP-binding positions include K141, E178–Y179, D187, and R211–N213. 3 residues coordinate Mg(2+): D248, E260, and N262. Residues D248, E260, and N262 each contribute to the Mn(2+) site.

The protein belongs to the RimK family. Requires Mg(2+) as cofactor. Mn(2+) serves as cofactor.

In Pseudoalteromonas atlantica (strain T6c / ATCC BAA-1087), this protein is Probable alpha-L-glutamate ligase 2.